A 151-amino-acid chain; its full sequence is Large ribosomal subunit protein uL30 (151 aa).

This sequence belongs to the universal ribosomal protein uL30 family. As to quaternary structure, part of the 50S ribosomal subunit.

The protein is Large ribosomal subunit protein uL30 of Methanothrix thermoacetophila (strain DSM 6194 / JCM 14653 / NBRC 101360 / PT) (Methanosaeta thermophila).